The sequence spans 799 residues: Ribonucleoside-diphosphate reductase large subunit (799 aa).

Substrate is bound by residues T192, S207–C208, G238, N408–E412, and P612–T616. A disulfide bridge links C208 with C424. The active-site Proton acceptor is N408. The Cysteine radical intermediate role is filled by C410. The active-site Proton acceptor is the E412. The disordered stretch occupies residues P765 to Q799. Residues G776–D793 are compositionally biased toward basic and acidic residues.

It belongs to the ribonucleoside diphosphate reductase large chain family. As to quaternary structure, heterotetramer composed of a homodimer of the large subunit (R1) and a homodimer of the small subunit (R2). Larger multisubunit protein complex are also active, composed of (R1)n(R2)n.

The catalysed reaction is a 2'-deoxyribonucleoside 5'-diphosphate + [thioredoxin]-disulfide + H2O = a ribonucleoside 5'-diphosphate + [thioredoxin]-dithiol. Ribonucleoside-diphosphate reductase holoenzyme provides the precursors necessary for viral DNA synthesis. Allows virus growth in non-dividing cells, as well as reactivation from latency in infected hosts. Catalyzes the biosynthesis of deoxyribonucleotides from the corresponding ribonucleotides. This is Ribonucleoside-diphosphate reductase large subunit from Equine herpesvirus 2 (strain 86/87) (EHV-2).